A 205-amino-acid polypeptide reads, in one-letter code: Small ribosomal subunit protein uS4 (205 aa).

A disordered region spans residues 18-46 (NIWGRPKSPVNRREYGPGQHGQRRKGKLS). An S4 RNA-binding domain is found at 94 to 157 (RRLDTVVYRA…KQLTFVLEAN (64 aa)).

Belongs to the universal ribosomal protein uS4 family. In terms of assembly, part of the 30S ribosomal subunit. Contacts protein S5. The interaction surface between S4 and S5 is involved in control of translational fidelity.

Its function is as follows. One of the primary rRNA binding proteins, it binds directly to 16S rRNA where it nucleates assembly of the body of the 30S subunit. Functionally, with S5 and S12 plays an important role in translational accuracy. The protein is Small ribosomal subunit protein uS4 of Rhodopseudomonas palustris (strain BisB18).